The following is a 248-amino-acid chain: Coenzyme F420:L-glutamate ligase (248 aa).

GTP-binding positions include Ile-15–Ile-18, Glu-45–Thr-46, and Lys-50. Asp-115 is an a divalent metal cation binding site. Asn-118 lines the GTP pocket. Residues Asp-155, Ser-156, and Gln-213 each coordinate a divalent metal cation. Met-211–Ile-218 provides a ligand contact to GTP.

It belongs to the CofE family. Homodimer. Requires Mg(2+) as cofactor. Mn(2+) serves as cofactor. It depends on K(+) as a cofactor.

The catalysed reaction is oxidized coenzyme F420-0 + GTP + L-glutamate = oxidized coenzyme F420-1 + GDP + phosphate + H(+). It catalyses the reaction oxidized coenzyme F420-1 + GTP + L-glutamate = oxidized coenzyme F420-2 + GDP + phosphate + H(+). The protein operates within cofactor biosynthesis; coenzyme F420 biosynthesis. Functionally, catalyzes the GTP-dependent successive addition of two or more gamma-linked L-glutamates to the L-lactyl phosphodiester of 7,8-didemethyl-8-hydroxy-5-deazariboflavin (F420-0) to form coenzyme F420-0-glutamyl-glutamate (F420-2) or polyglutamated F420 derivatives. In Methanococcus maripaludis (strain C6 / ATCC BAA-1332), this protein is Coenzyme F420:L-glutamate ligase.